We begin with the raw amino-acid sequence, 313 residues long: MAFNLKGRSLLTLKEYTPQEIRYLLDIAKQVKAERKAGIVHQRFVGKTIALIFEKRSTRTRCAFETAFGEEGGHPVFLSTDDIQLGAKESIEDTARVLGRMFDAIEFRGFKQETVEILAKYAGVPVYNGLTDEYHPTQVLADLMTIEEEFGSLKGRKLVFVGDGRNNMANTLAIGCAKMGMHYVINSPKELWPSESFIKEIKDMAAENGGTFELTSVPGEGLEGADAIYTDVWASMGEEAKAEERERLLRPYQVNEEMMKKTGRDDTIFLHCLPAVKGQEVTFEVIEGKQSRVWDQAENRKHTIKAVLIATLL.

Residues 57-60, Q84, R108, and 135-138 contribute to the carbamoyl phosphate site; these read STRT and HPTQ. L-ornithine is bound by residues N167, D231, and 235–236; that span reads SM. Carbamoyl phosphate-binding positions include 272-273 and R300; that span reads CL.

Belongs to the aspartate/ornithine carbamoyltransferase superfamily. OTCase family.

It is found in the cytoplasm. The catalysed reaction is carbamoyl phosphate + L-ornithine = L-citrulline + phosphate + H(+). The protein operates within amino-acid biosynthesis; L-arginine biosynthesis; L-arginine from L-ornithine and carbamoyl phosphate: step 1/3. In terms of biological role, reversibly catalyzes the transfer of the carbamoyl group from carbamoyl phosphate (CP) to the N(epsilon) atom of ornithine (ORN) to produce L-citrulline. The polypeptide is Ornithine carbamoyltransferase (Caldanaerobacter subterraneus subsp. tengcongensis (strain DSM 15242 / JCM 11007 / NBRC 100824 / MB4) (Thermoanaerobacter tengcongensis)).